An 87-amino-acid chain; its full sequence is MDLFKFFSKQSSKDVAKERLKLILIQDRNSISPDVLESIREDMLKVISKYIEIDNEDVDIKMSSVEEIEGMSPALIASIPIKRIKKK.

Belongs to the MinE family.

Prevents the cell division inhibition by proteins MinC and MinD at internal division sites while permitting inhibition at polar sites. This ensures cell division at the proper site by restricting the formation of a division septum at the midpoint of the long axis of the cell. In Clostridium botulinum (strain ATCC 19397 / Type A), this protein is Cell division topological specificity factor.